Consider the following 459-residue polypeptide: MLKIFNTLTREKEIFKPIHENKVGMYVCGVTVYDLCHIGHGRTFVCFDVIARYLRSLGYDLTYVRNITDVDDKIIKRALENKETCDQLVDRMVQEMYKDFDALNVLRPDFEPRATHHIPEIIEIVEKLIKRGHAYVADNGDVMFDVESFKEYGKLSRQDLEQLQAGARIEINEIKKNPMDFVLWKMSKENEPSWASPWGAGRPGWHIECSAMNCKQLGEYFDIHGGGSDLMFPHHENEIAQSCCAHGGQYVNYWIHSGMIMVDKEKMSKSLGNFFTIRDVLNHYNAEAVRYFLLTAHYRSQLNYSEENLNLAQGALERLYTALRGTDQSAVAFGGENFVATFREAMDDDFNTPNALSVLFEMAREINKLKTEDVEKANGLAARLRELGAILGLLQQEPEKFLQAGSNDDEVAKIEALIKQRNEARTAKDWSAADSARNELTAMGIVLEDGPNGTTWRKQ.

Cysteine 28 serves as a coordination point for Zn(2+). The 'HIGH' region signature appears at 30-40 (VTVYDLCHIGH). Zn(2+)-binding residues include cysteine 209, histidine 234, and glutamate 238. Residues 266 to 270 (KMSKS) carry the 'KMSKS' region motif. Lysine 269 is an ATP binding site.

The protein belongs to the class-I aminoacyl-tRNA synthetase family. Monomer. Requires Zn(2+) as cofactor.

The protein localises to the cytoplasm. It carries out the reaction tRNA(Cys) + L-cysteine + ATP = L-cysteinyl-tRNA(Cys) + AMP + diphosphate. The sequence is that of Cysteine--tRNA ligase (cysS) from Haemophilus influenzae (strain ATCC 51907 / DSM 11121 / KW20 / Rd).